The chain runs to 417 residues: Leucine-rich repeat-containing protein 42 (417 aa).

LRR repeat units lie at residues 167–188 (CLHSLDLSCCKLGDEHELLAHL), 195–215 (SLTELYLKDNCLSNIGIQKMT), 227–248 (KLKVLDLSSNPGITDRGVCFLF), and 252–273 (LLKFLDLSDTSIQDPSGTLKKI). The disordered stretch occupies residues 360–390 (FFRPKEQKDPDSSNSEKRRHSTKRTGADCVQ). The span at 362-375 (RPKEQKDPDSSNSE) shows a compositional bias: basic and acidic residues.

The protein belongs to the LRRC42 family.

In Xenopus laevis (African clawed frog), this protein is Leucine-rich repeat-containing protein 42 (lrrc42).